The sequence spans 514 residues: Extracellular exo-inulinase (514 aa).

Positions 1–18 (MRAFLALIFLTFVMNVES) are cleaved as a signal peptide. Substrate-binding positions include 33–34 (ND) and Gln-52. Asp-34 serves as the catalytic Nucleophile. N-linked (GlcNAc...) asparagine glycosylation occurs at Asn-56. Positions 60 and 95 each coordinate substrate. Asn-104 and Asn-110 each carry an N-linked (GlcNAc...) asparagine glycan. 162 to 163 (RD) lines the substrate pocket. N-linked (GlcNAc...) asparagine glycans are attached at residues Asn-197 and Asn-203. Substrate is bound by residues Glu-214 and Trp-300. Glu-214 serves as the catalytic Proton donor/acceptor. Asn-357, Asn-371, Asn-389, and Asn-422 each carry an N-linked (GlcNAc...) asparagine glycan.

This sequence belongs to the glycosyl hydrolase 32 family.

It localises to the secreted. The enzyme catalyses Hydrolysis of terminal, non-reducing (2-&gt;1)- and (2-&gt;6)-linked beta-D-fructofuranose residues in fructans.. Exo-inulinase involved in utilization of the plant storage polymer inulin, consisting of fructooligosaccharides with a degree of polymerization (DP) value from 2 to 60. Splits off terminal fructose units successively from the non-reducing end of the inulin molecule. The chain is Extracellular exo-inulinase from Meyerozyma guilliermondii (strain ATCC 6260 / CBS 566 / DSM 6381 / JCM 1539 / NBRC 10279 / NRRL Y-324) (Yeast).